The chain runs to 91 residues: UPF0298 protein M28_Spy0318 (91 aa).

This sequence belongs to the UPF0298 family.

The protein localises to the cytoplasm. The protein is UPF0298 protein M28_Spy0318 of Streptococcus pyogenes serotype M28 (strain MGAS6180).